We begin with the raw amino-acid sequence, 244 residues long: 5-oxoprolinase subunit A (244 aa).

This sequence belongs to the LamB/PxpA family. As to quaternary structure, forms a complex composed of PxpA, PxpB and PxpC.

The enzyme catalyses 5-oxo-L-proline + ATP + 2 H2O = L-glutamate + ADP + phosphate + H(+). Catalyzes the cleavage of 5-oxoproline to form L-glutamate coupled to the hydrolysis of ATP to ADP and inorganic phosphate. In Citrobacter koseri (strain ATCC BAA-895 / CDC 4225-83 / SGSC4696), this protein is 5-oxoprolinase subunit A.